We begin with the raw amino-acid sequence, 1400 residues long: DNA-directed RNA polymerase subunit beta' (1400 aa).

Positions 70, 72, 85, and 88 each coordinate Zn(2+). Positions 460, 462, and 464 each coordinate Mg(2+). Zn(2+) contacts are provided by Cys-814, Cys-888, Cys-895, and Cys-898.

The protein belongs to the RNA polymerase beta' chain family. The RNAP catalytic core consists of 2 alpha, 1 beta, 1 beta' and 1 omega subunit. When a sigma factor is associated with the core the holoenzyme is formed, which can initiate transcription. Mg(2+) serves as cofactor. The cofactor is Zn(2+).

The catalysed reaction is RNA(n) + a ribonucleoside 5'-triphosphate = RNA(n+1) + diphosphate. Its function is as follows. DNA-dependent RNA polymerase catalyzes the transcription of DNA into RNA using the four ribonucleoside triphosphates as substrates. The protein is DNA-directed RNA polymerase subunit beta' of Methylococcus capsulatus (strain ATCC 33009 / NCIMB 11132 / Bath).